The following is a 301-amino-acid chain: Uricase-2 isozyme 2 (301 aa).

Active-site charge relay system residues include lysine 17 and threonine 63. 7 residues coordinate urate: threonine 63, aspartate 64, phenylalanine 165, arginine 182, valine 237, glutamine 238, and asparagine 257. Residue histidine 259 is the Charge relay system of the active site. The Microbody targeting signal signature appears at 299–301 (SKL).

Belongs to the uricase family.

It localises to the peroxisome. The enzyme catalyses urate + O2 + H2O = 5-hydroxyisourate + H2O2. The protein operates within purine metabolism; urate degradation; (S)-allantoin from urate: step 1/3. Catalyzes the oxidation of uric acid to 5-hydroxyisourate, which is further processed to form (S)-allantoin. The protein is Uricase-2 isozyme 2 of Canavalia lineata (Beach bean).